The following is a 362-amino-acid chain: Resuscitation-promoting factor RpfB (362 aa).

Positions 1 to 22 are cleaved as a signal peptide; it reads MLRGVVGAFLVSLTVAGSYAVA. A G5 domain is found at 192 to 272; sequence VTRMRIEKVT…NGVLRVGAKP (81 aa).

The protein belongs to the transglycosylase family. Rpf subfamily.

In terms of biological role, factor that stimulates resuscitation of dormant cells. Has peptidoglycan (PG) hydrolytic activity. Active in the pM concentration range. Has little to no effect on actively-growing cells. PG fragments could either directly activate the resuscitation pathway of dormant bacteria or serve as a substrate for endogenous Rpf, resulting in low molecular weight products with resuscitation activity. The protein is Resuscitation-promoting factor RpfB (rpfB) of Mycolicibacterium smegmatis (strain ATCC 700084 / mc(2)155) (Mycobacterium smegmatis).